The following is a 160-amino-acid chain: Ribosomal RNA large subunit methyltransferase H (160 aa).

S-adenosyl-L-methionine-binding residues include Leu76 and Gly108.

It belongs to the RNA methyltransferase RlmH family. In terms of assembly, homodimer.

Its subcellular location is the cytoplasm. It catalyses the reaction pseudouridine(1915) in 23S rRNA + S-adenosyl-L-methionine = N(3)-methylpseudouridine(1915) in 23S rRNA + S-adenosyl-L-homocysteine + H(+). Specifically methylates the pseudouridine at position 1915 (m3Psi1915) in 23S rRNA. The protein is Ribosomal RNA large subunit methyltransferase H of Rhodopseudomonas palustris (strain HaA2).